The chain runs to 203 residues: MTPLVLLIIIGAYLLGSISSAVLISRLYRLPDPRDSGSGNPGATNVLRLGGKSAASMVLVCDVLKGMLPVWLSYFLNINPFLLGIIGIAACLGHIYPIFFHFRGGKGVATALGALAPIGWDLSGMLIGTWLLTVFITGYSSLGSLITALAAPLLTWFVKPEYTMAVSMLSCLIVLRHHDNLRRLFEGKETKIWQKISRKAKLK.

The next 4 helical transmembrane spans lie at Leu4 to Ile24, Pro80 to Phe100, Ala116 to Ile136, and Gly138 to Val158.

The protein belongs to the PlsY family. In terms of assembly, probably interacts with PlsX.

It localises to the cell inner membrane. The enzyme catalyses an acyl phosphate + sn-glycerol 3-phosphate = a 1-acyl-sn-glycero-3-phosphate + phosphate. Its pathway is lipid metabolism; phospholipid metabolism. In terms of biological role, catalyzes the transfer of an acyl group from acyl-phosphate (acyl-PO(4)) to glycerol-3-phosphate (G3P) to form lysophosphatidic acid (LPA). This enzyme utilizes acyl-phosphate as fatty acyl donor, but not acyl-CoA or acyl-ACP. The chain is Glycerol-3-phosphate acyltransferase from Photobacterium profundum (strain SS9).